Consider the following 449-residue polypeptide: Probable cysteine proteinase 224L (449 aa).

Catalysis depends on residues C99, H292, and N322. The chain crosses the membrane as a helical span at residues 429-449 (DTQIVFIFFLSVVILFIFIIL).

It belongs to the peptidase C1 family.

The protein resides in the membrane. Functionally, probable cysteine protease. This chain is Probable cysteine proteinase 224L, found in Acheta domesticus (House cricket).